Here is a 369-residue protein sequence, read N- to C-terminus: Serpentine receptor class epsilon-2 (369 aa).

Topologically, residues 1-20 (MLIQYHKISNNDPNRIQLLS) are extracellular. A helical transmembrane segment spans residues 21–41 (MIFCEIILLIFELFEFAAIIF). Residues 42–55 (NMSRYQFHFNLKVV) lie on the Cytoplasmic side of the membrane. A helical membrane pass occupies residues 56-76 (VGYAIFAYWFDIIARITIAFF). Topologically, residues 77–118 (EIGLFNLDDQTIAVETEKLPWNYKNMFFMLLFCCSTYRVYFM) are extracellular. Residues 119–139 (FLICSVTLLLAVERFLATIWV) form a helical membrane-spanning segment. Residues 140-148 (STYESVQHK) lie on the Cytoplasmic side of the membrane. Residues 149-169 (WVSIVLTSTNSIAGIFGSLLF) form a helical membrane-spanning segment. The Extracellular portion of the chain corresponds to 170 to 178 (HYELIFDTA). The chain crosses the membrane as a helical span at residues 179–199 (VWCSLGLCFNFVSIFLYVILF). The Cytoplasmic segment spans residues 200 to 234 (NSNKSKIELCQTREITQSYTLSLRFQLNENLKIMN). A helical transmembrane segment spans residues 235 to 255 (WIKNSILVVTCFNTLLAGFLI). At 256 to 274 (ASNNEYLKNDYPVLVKCCH) the chain is on the extracellular side. A helical membrane pass occupies residues 275–295 (TFLNLGIAIYAQVVFFVAILA). At 296-369 (DRHFRTYFLR…VAKKKRFWRV (74 aa)) the chain is on the cytoplasmic side.

The protein belongs to the nematode receptor-like protein sre family.

It localises to the cell membrane. This is Serpentine receptor class epsilon-2 (sre-2) from Caenorhabditis elegans.